The chain runs to 317 residues: Olfactory receptor 2T27 (317 aa).

Over 1–22 (MEQSNYSVYADFILLGLFSNAR) the chain is Extracellular. Asn5 carries an N-linked (GlcNAc...) asparagine glycan. A helical membrane pass occupies residues 23–43 (FPWLLFALILLVFLTSIASNV). Topologically, residues 44–60 (VKIILIHIDSRLHTPMY) are cytoplasmic. Residues 61 to 83 (FLLSQLSLRDILYISTIVPKMLV) form a helical membrane-spanning segment. The Extracellular segment spans residues 84 to 97 (DQVMSQRAISFAGC). Residues Cys97 and Cys189 are joined by a disulfide bond. Residues 98 to 118 (TAQHFLYLTLAGAEFFLLGLM) form a helical membrane-spanning segment. Over 119–139 (SYDRYVAICNPLHYPVLMSRK) the chain is Cytoplasmic. The helical transmembrane segment at 140-160 (ICWLIVAAAWLGGSIDGFLLT) threads the bilayer. The Extracellular segment spans residues 161 to 197 (PVTMQFPFCASREINHFFCEVPALLKLSCTDTSAYET). The chain crosses the membrane as a helical span at residues 198–218 (AMYVCCIMMLLIPFSVISGSY). Over 219-244 (TRILITVYRMSEAEGRGKAVATCSSH) the chain is Cytoplasmic. A helical membrane pass occupies residues 245–265 (MVVVSLFYGAAMYTYVLPHSY). Over 266–271 (HTPEQD) the chain is Extracellular. Residues 272–292 (KAVSAFYTILTPMLNPLIYSL) traverse the membrane as a helical segment. Residues 293-317 (RNKDVTGALQKVVGRCVSSGKVTTF) are Cytoplasmic-facing.

The protein belongs to the G-protein coupled receptor 1 family.

The protein resides in the cell membrane. In terms of biological role, odorant receptor. In Homo sapiens (Human), this protein is Olfactory receptor 2T27 (OR2T27).